A 568-amino-acid polypeptide reads, in one-letter code: NADPH oxidase 3 (568 aa).

Residues 1-12 are Cytoplasmic-facing; that stretch reads MPTCWILNESVS. Residues 13-33 traverse the membrane as a helical segment; that stretch reads FVVALLWLAINIYLFIDTFCW. At 34–49 the chain is on the extracellular side; sequence YAEEESFFYTRVILGS. Residues 50–70 traverse the membrane as a helical segment; that stretch reads ALAWARASAVCLNFNCMLILL. The region spanning 55–284 is the Ferric oxidoreductase domain; sequence RASAVCLNFN…VVLYACEIII (230 aa). Residues 71–103 lie on the Cytoplasmic side of the membrane; that stretch reads PVSRNFVSLVRGTSVCCRGPWRRQLDKNLKFHK. A helical transmembrane segment spans residues 104-124; it reads LVAYGIAVNSVIHIVAHLFNL. Over 125–167 the chain is Extracellular; the sequence is ERYHLGQAKDAEGLLAALSKLGNAPNESYLNPVRTLYTGTTTQ. The helical transmembrane segment at 168–188 threads the bilayer; that stretch reads LLMTVSGITGLVISLALILIM. The Cytoplasmic portion of the chain corresponds to 189–201; the sequence is TSSTEFIRQSSYE. Residues 202–222 traverse the membrane as a helical segment; the sequence is LFWYTHHIFIFLFISLAIHGG. Residues 223–395 are Extracellular-facing; sequence GRIIRGQTPE…DGPFGGSLAD (173 aa). Residue Asn-238 is glycosylated (N-linked (GlcNAc...) asparagine). In terms of domain architecture, FAD-binding FR-type spans 285-395; that stretch reads RFWRSHQEVV…DGPFGGSLAD (111 aa). The chain crosses the membrane as a helical span at residues 396–416; sequence VFHYPVSVCIATGIGVTPFAS. At 417 to 568 the chain is on the cytoplasmic side; that stretch reads LLKSVWYKCC…VHFYYNKENF (152 aa).

In terms of assembly, forms a heterodimer with CYBA/p22phox which is essential for its activity and cell membrane localization. Heme is required as a cofactor. Post-translationally, N-glycosylated in a CYBA/p22phox-dependent manner. Expressed in the inner ear by the spiral glanglia and the organ of Corti.

The protein localises to the cell membrane. The catalysed reaction is NADPH + 2 O2 = 2 superoxide + NADP(+) + H(+). Its activity is regulated as follows. Activated by the ototoxic drug cisplatin. Activated by NOXO1. Cooperatively activated by NCF1 and NCF2 or NOXA1 in a phorbol 12-myristate 13-acetate (PMA)-dependent manner. Inhibited by diphenyleneiodonium chloride. Functionally, NADPH oxidase that catalyzes the generation of superoxide from molecular oxygen utilizing NADPH as an electron donor, upon formation of a complex with CYBA/p22phox. Plays a role in the biogenesis of otoconia/otolith, which are crystalline structures of the inner ear involved in the perception of gravity. In Rattus norvegicus (Rat), this protein is NADPH oxidase 3 (Nox3).